A 436-amino-acid polypeptide reads, in one-letter code: GTPase Der (436 aa).

EngA-type G domains are found at residues 4–167 (PIVA…PDEA) and 175–351 (IRFS…DNHR). GTP is bound by residues 10–17 (GRPNVGKS), 57–61 (DTGGI), 119–122 (NKVD), 181–188 (GRPNVGKS), 229–233 (DTAGM), and 294–297 (NKWD). A KH-like domain is found at 352–436 (KRITSSTLND…PIKLIVRARK (85 aa)).

This sequence belongs to the TRAFAC class TrmE-Era-EngA-EngB-Septin-like GTPase superfamily. EngA (Der) GTPase family. Associates with the 50S ribosomal subunit.

Functionally, GTPase that plays an essential role in the late steps of ribosome biogenesis. This Leuconostoc mesenteroides subsp. mesenteroides (strain ATCC 8293 / DSM 20343 / BCRC 11652 / CCM 1803 / JCM 6124 / NCDO 523 / NBRC 100496 / NCIMB 8023 / NCTC 12954 / NRRL B-1118 / 37Y) protein is GTPase Der.